Here is a 124-residue protein sequence, read N- to C-terminus: Glutaredoxin-2 (124 aa).

A disulfide bridge connects residues Cys-13 and Cys-16.

It belongs to the glutaredoxin family. In terms of assembly, homodimer.

The protein resides in the host cytoplasm. Glutaredoxin necessary for virion morphogenesis and virus replication. Functions as a thiol-disulfide transfer protein between membrane-associated OPG128 and substrates OPG095 or OPG053. The complete pathway for formation of disulfide bonds in intracellular virion membrane proteins sequentially involves oxidation of OPG072, OPG128 and OPG088. Exhibit thioltransferase and dehydroascorbate reductase activities in vitro. The chain is Glutaredoxin-2 (OPG088) from Oryctolagus cuniculus (Rabbit).